Reading from the N-terminus, the 100-residue chain is Large ribosomal subunit protein bL21 (100 aa).

The protein belongs to the bacterial ribosomal protein bL21 family. As to quaternary structure, part of the 50S ribosomal subunit. Contacts protein L20.

In terms of biological role, this protein binds to 23S rRNA in the presence of protein L20. The chain is Large ribosomal subunit protein bL21 from Wolbachia sp. subsp. Brugia malayi (strain TRS).